Here is a 187-residue protein sequence, read N- to C-terminus: GTPase KRas (187 aa).

Residues G10 to A18, V29 to T35, A59 to G60, and N116 to A119 contribute to the GTP site. An Effector region motif is present at residues Y32 to Y40. Residues E168–L187 form a disordered region. C184 carries the cysteine methyl ester modification. Residue C184 is the site of S-farnesyl cysteine attachment. The propeptide at S185–L187 is removed in mature form.

This sequence belongs to the small GTPase superfamily. Ras family.

It is found in the cell membrane. Its subcellular location is the cytoplasm. It carries out the reaction GTP + H2O = GDP + phosphate + H(+). With respect to regulation, alternates between an inactive form bound to GDP and an active form bound to GTP. Activated by a guanine nucleotide-exchange factor (GEF) and inactivated by a GTPase-activating protein (GAP). Its function is as follows. Ras proteins bind GDP/GTP and possess intrinsic GTPase activity. Plays an important role in the regulation of cell proliferation. This chain is GTPase KRas (kras), found in Xenopus laevis (African clawed frog).